Here is a 201-residue protein sequence, read N- to C-terminus: NADH-ubiquinone oxidoreductase 21.3 kDa subunit (201 aa).

Complex I is composed of about 40 different subunits.

It is found in the mitochondrion inner membrane. The catalysed reaction is a ubiquinone + NADH + 5 H(+)(in) = a ubiquinol + NAD(+) + 4 H(+)(out). Its function is as follows. Transfer of electrons from NADH to the respiratory chain. The immediate electron acceptor for the enzyme is believed to be ubiquinone. This is NADH-ubiquinone oxidoreductase 21.3 kDa subunit from Neurospora crassa (strain ATCC 24698 / 74-OR23-1A / CBS 708.71 / DSM 1257 / FGSC 987).